The following is a 274-amino-acid chain: MREGDSNSKKSADVAVLSIILTGSTLTLIYTYKRYLTQFKRTNDIPRRIFRKHWLYGKVTSVGDGDNFHFFHMPGGIRGGWGWLRPVPQMIKNGSTAEKLVGDSRNMRFFNFNWITHGRSTKSKIQKAKSQFLKLNVPYKNRKNLPTIPIRLCGIDAPERAHFGNPAQPFGNEALIWLQNRILGKKVWVKPLSIDQYNRCVARVSYWDWFGGWKDLSLEMLKDGLAVVYEGKVNTEFDDREDKYRYYEFLARSRKKGLWIQNKFETPGEYKKRI.

Residues 15 to 32 (AVLSIILTGSTLTLIYTY) traverse the membrane as a helical segment. The TNase-like domain maps to 53–261 (HWLYGKVTSV…RSRKKGLWIQ (209 aa)). Arginine 151 is a catalytic residue. Position 156 (aspartate 156) interacts with Ca(2+). Catalysis depends on residues glutamate 159 and arginine 199.

This sequence belongs to the LCL3 family.

Its subcellular location is the mitochondrion. The protein localises to the membrane. This Saccharomyces cerevisiae (strain Lalvin EC1118 / Prise de mousse) (Baker's yeast) protein is Probable endonuclease LCL3 (LCL3).